Reading from the N-terminus, the 535-residue chain is Alpha-1,3-mannosyl-glycoprotein 4-beta-N-acetylglucosaminyltransferase A (535 aa).

Residues 1 to 4 (MRLR) are Cytoplasmic-facing. Residues 5–27 (NGTVATALAFITSFLTLSWYTTW) form a helical; Signal-anchor for type II membrane protein membrane-spanning segment. Residues 28–63 (QNGKEKLIAYQREFLALKERLRIAEHRISQRSSELN) are a coiled coil. At 28–535 (QNGKEKLIAY…NEIHIKKATN (508 aa)) the chain is on the lumenal side. N-linked (GlcNAc...) asparagine glycans are attached at residues Asn-77 and Asn-458. Ser-474 carries the post-translational modification Phosphoserine.

The protein belongs to the glycosyltransferase 54 family. Requires a divalent metal cation as cofactor. Post-translationally, N-glycosylated.

The protein localises to the golgi apparatus membrane. It localises to the secreted. It catalyses the reaction N(4)-{beta-D-GlcNAc-(1-&gt;2)-alpha-D-Man-(1-&gt;3)-[beta-D-GlcNAc-(1-&gt;2)-alpha-D-Man-(1-&gt;6)]-beta-D-Man-(1-&gt;4)-beta-D-GlcNAc-(1-&gt;4)-beta-D-GlcNAc}-L-asparaginyl-[protein] + UDP-N-acetyl-alpha-D-glucosamine = N(4)-{beta-D-GlcNAc-(1-&gt;2)-[beta-D-GlcNAc-(1-&gt;4)]-alpha-D-Man-(1-&gt;3)-[beta-D-GlcNAc-(1-&gt;2)-alpha-D-Man-(1-&gt;6)]-beta-D-Man-(1-&gt;4)-beta-D-GlcNAc-(1-&gt;4)-beta-D-GlcNAc}-L-asparaginyl-[protein] + UDP + H(+). The catalysed reaction is an N(4)-{beta-D-GlcNAc-(1-&gt;2)-alpha-D-Man-(1-&gt;3)-[alpha-D-Man-(1-&gt;6)]-beta-D-Man-(1-&gt;4)-beta-D-GlcNAc-(1-&gt;4)-beta-D-GlcNAc}-L-asparaginyl-[protein] + UDP-N-acetyl-alpha-D-glucosamine = an N(4)-{beta-D-GlcNAc-(1-&gt;2)-[beta-D-GlcNAc-(1-&gt;4)]-alpha-D-Man-(1-&gt;3)-[alpha-D-Man-(1-&gt;6)]-beta-D-Man-(1-&gt;4)-beta-D-GlcNAc-(1-&gt;4)-beta-D-GlcNAc}-L-asparaginyl-[protein] + UDP + H(+). The enzyme catalyses an N(4)-{beta-D-GlcNAc-(1-&gt;2)-alpha-D-Man-(1-&gt;3)-[beta-D-GlcNAc-(1-&gt;2)-[beta-D-GlcNAc-(1-&gt;6)]-alpha-D-Man-(1-&gt;6)]-beta-D-Man-(1-&gt;4)-beta-D-GlcNAc-(1-&gt;4)-beta-D-GlcNAc}-L-asparaginyl-[protein] + UDP-N-acetyl-alpha-D-glucosamine = an N(4)-{beta-D-GlcNAc-(1-&gt;2)-[beta-D-GlcNAc-(1-&gt;4)]-alpha-D-Man-(1-&gt;3)-[beta-D-GlcNAc-(1-&gt;2)-[beta-D-GlcNAc-(1-&gt;6)]-alpha-D-Man-(1-&gt;6)]-beta-D-Man-(1-&gt;4)-beta-D-GlcNAc-(1-&gt;4)-beta-D-GlcNAc}-L-asparaginyl-[protein] + UDP + H(+). It carries out the reaction an N(4)-{beta-D-GlcNAc-(1-&gt;2)-alpha-D-Man-(1-&gt;3)-[beta-D-GlcNAc-(1-&gt;2)-alpha-D-Man-(1-&gt;6)]-beta-D-Man-(1-&gt;4)-beta-D-GlcNAc-(1-&gt;4)-[alpha-L-Fuc-(1-&gt;6)]-beta-D-GlcNAc}-L-asparaginyl-[protein] + UDP-N-acetyl-alpha-D-glucosamine = N(4)-{beta-D-GlcNAc-(1-&gt;2)-[beta-D-GlcNAc-(1-&gt;4)]-alpha-D-Man-(1-&gt;3)-[beta-D-GlcNAc-(1-&gt;2)-alpha-D-Man-(1-&gt;6)]-beta-D-Man-(1-&gt;4)-beta-D-GlcNAc-(1-&gt;4)-[alpha-L-Fuc-(1-&gt;6)]-beta-D-GlcNAc}-asparaginyl-[protein] + UDP + H(+). It catalyses the reaction an N(4)-{beta-D-GlcNAc-(1-&gt;2)-alpha-D-Man-(1-&gt;3)-[beta-D-Gal-(1-&gt;4)-beta-D-GlcNAc-(1-&gt;2)-alpha-D-Man-(1-&gt;6)]-beta-D-Man-(1-&gt;4)-beta-D-GlcNAc-(1-&gt;4)-beta-D-GlcNAc}-L-asparaginyl-[protein] + UDP-N-acetyl-alpha-D-glucosamine = an N(4)-{beta-D-GlcNAc-(1-&gt;2)-[beta-D-GlcNAc-(1-&gt;4)]-alpha-D-Man-(1-&gt;3)-[beta-D-Gal-(1-&gt;4)-beta-D-GlcNAc-(1-&gt;2)-alpha-D-Man-(1-&gt;6)]-beta-D-Man-(1-&gt;4)-beta-D-GlcNAc-(1-&gt;4)-beta-D-GlcNAc}-L-asparaginyl-[protein] + UDP + H(+). The catalysed reaction is N(4)-{beta-D-GlcNAc-(1-&gt;2)-alpha-D-Man-(1-&gt;3)-[alpha-D-Man-(1-&gt;3)-{alpha-D-Man-(1-&gt;6)}-alpha-D-Man-(1-&gt;6)]-beta-D-Man-(1-&gt;4)-beta-D-GlcNAc-(1-&gt;4)-beta-D-GlcNAc}-asparaginyl-[protein] + UDP-N-acetyl-alpha-D-glucosamine = N(4)-{beta-D-GlcNAc-(1-&gt;2)-[beta-D-GlcNAc-(1-&gt;4)]-alpha-D-Man-(1-&gt;3)-[alpha-D-Man-(1-&gt;3)-{alpha-D-Man-(1-&gt;6)}-alpha-D-Man-(1-&gt;6)]-beta-D-Man-(1-&gt;4)-beta-D-GlcNAc-(1-&gt;4)-beta-D-GlcNAc}-asparaginyl-[protein] + UDP + H(+). The enzyme catalyses N(4)-{beta-D-GlcNAc-(1-&gt;2)-alpha-D-Man-(1-&gt;3)-beta-D-Man-(1-&gt;4)-beta-D-GlcNAc-(1-&gt;4)-beta-D-GlcNAc}-asparaginyl-[protein] + UDP-N-acetyl-alpha-D-glucosamine = N(4)-{beta-D-GlcNAc-(1-&gt;2)-[beta-D-GlcNAc-(1-&gt;4)]-alpha-D-Man-(1-&gt;3)-beta-D-Man-(1-&gt;4)-beta-D-GlcNAc-(1-&gt;4)-beta-D-GlcNAc}-asparaginyl-[protein] + UDP + H(+). It functions in the pathway protein modification; protein glycosylation. Its activity is regulated as follows. Inhibited by UDP. Its function is as follows. Glycosyltransferase that catalyze the transfer of GlcNAc from UDP-GlcNAc to the GlcNAcbeta1-2Manalpha1-3 arm of the core structure of N-linked glycans through a beta1-4 linkage and participates in the production of tri- and tetra-antennary N-linked sugar chains. Involved in glucose transport by mediating SLC2A2/GLUT2 glycosylation, thereby controlling cell-surface expression of SLC2A2 in pancreatic beta cells. The chain is Alpha-1,3-mannosyl-glycoprotein 4-beta-N-acetylglucosaminyltransferase A from Pongo abelii (Sumatran orangutan).